The chain runs to 278 residues: Large ribosomal subunit protein uL2 (278 aa).

Disordered regions lie at residues 29-53 (PVKSLTEGKRKTGGRNNKGHVTSRG) and 221-278 (RGVA…KKKR). Over residues 269–278 (IRSRHAKKKR) the composition is skewed to basic residues.

It belongs to the universal ribosomal protein uL2 family. In terms of assembly, part of the 50S ribosomal subunit. Forms a bridge to the 30S subunit in the 70S ribosome.

In terms of biological role, one of the primary rRNA binding proteins. Required for association of the 30S and 50S subunits to form the 70S ribosome, for tRNA binding and peptide bond formation. It has been suggested to have peptidyltransferase activity; this is somewhat controversial. Makes several contacts with the 16S rRNA in the 70S ribosome. The protein is Large ribosomal subunit protein uL2 of Erythrobacter litoralis (strain HTCC2594).